Consider the following 297-residue polypeptide: ClpXP adapter protein SpxH (297 aa).

Belongs to the SpxH family. As to quaternary structure, interacts with Spx.

The protein resides in the cytoplasm. Functionally, adapter protein required for efficient degradation of Spx by ClpXP under non-stress conditions. Interaction with Spx stabilizes Spx and exposes the C-terminus of Spx for recognition and proteolysis by ClpXP. In Bacillus thuringiensis subsp. konkukian (strain 97-27), this protein is ClpXP adapter protein SpxH.